A 159-amino-acid polypeptide reads, in one-letter code: uncharacterized protein (159 aa).

The 61-residue stretch at 6-66 (LSKKDWEIIK…YLRFDKLGYT (61 aa)) folds into the HTH asnC-type domain. The segment at residues 25 to 44 (DAEIGRRIGLSKSAVRWRRI) is a DNA-binding region (H-T-H motif).

This is an uncharacterized protein from Pyrococcus horikoshii (strain ATCC 700860 / DSM 12428 / JCM 9974 / NBRC 100139 / OT-3).